The primary structure comprises 701 residues: Glycine--tRNA ligase beta subunit (701 aa).

Belongs to the class-II aminoacyl-tRNA synthetase family. In terms of assembly, tetramer of two alpha and two beta subunits.

The protein resides in the cytoplasm. The catalysed reaction is tRNA(Gly) + glycine + ATP = glycyl-tRNA(Gly) + AMP + diphosphate. The protein is Glycine--tRNA ligase beta subunit of Anaeromyxobacter sp. (strain K).